Here is a 200-residue protein sequence, read N- to C-terminus: Small ribosomal subunit protein uS4 (200 aa).

The interval 22 to 43 (TGKELQKRPYPPGQHGPSQRRK) is disordered. An S4 RNA-binding domain is found at 92-152 (SRLDNLVYRL…EKSRNLQVIK (61 aa)).

This sequence belongs to the universal ribosomal protein uS4 family. As to quaternary structure, part of the 30S ribosomal subunit. Contacts protein S5. The interaction surface between S4 and S5 is involved in control of translational fidelity.

In terms of biological role, one of the primary rRNA binding proteins, it binds directly to 16S rRNA where it nucleates assembly of the body of the 30S subunit. Functionally, with S5 and S12 plays an important role in translational accuracy. The protein is Small ribosomal subunit protein uS4 of Geobacillus sp. (strain WCH70).